A 227-amino-acid polypeptide reads, in one-letter code: 7-cyano-7-deazaguanine synthase (227 aa).

11-21 (VSGGMDSAALL) provides a ligand contact to ATP. Zn(2+) is bound by residues Cys-192, Cys-200, Cys-203, and Cys-206.

Belongs to the QueC family. Zn(2+) is required as a cofactor.

It catalyses the reaction 7-carboxy-7-deazaguanine + NH4(+) + ATP = 7-cyano-7-deazaguanine + ADP + phosphate + H2O + H(+). It functions in the pathway purine metabolism; 7-cyano-7-deazaguanine biosynthesis. In terms of biological role, catalyzes the ATP-dependent conversion of 7-carboxy-7-deazaguanine (CDG) to 7-cyano-7-deazaguanine (preQ(0)). The sequence is that of 7-cyano-7-deazaguanine synthase from Persephonella marina (strain DSM 14350 / EX-H1).